Reading from the N-terminus, the 578-residue chain is Vacuolar protein 8 (578 aa).

Gly2 carries N-myristoyl glycine lipidation. Residues Cys4, Cys5, and Cys7 are each lipidated (S-palmitoyl cysteine). Ser11 and Ser16 each carry phosphoserine. 9 ARM repeats span residues 37–75 (DKDQ…AEIT), 76–114 (EKYV…NLAV), 116–155 (NENK…NLAT), 157–196 (DDNK…NMTH), 198–237 (EENR…NIAV), 239–280 (EANR…NLAS), 282–321 (TSYQ…NISI), 323–363 (PLNE…NLAA), and 407–446 (DVSK…NLCS). Residue Lys77 forms a Glycyl lysine isopeptide (Lys-Gly) (interchain with G-Cter in ubiquitin) linkage. Lys515 is covalently cross-linked (Glycyl lysine isopeptide (Lys-Gly) (interchain with G-Cter in ubiquitin)). Residues 527-557 (SGIDVKNPGSNNNPSSNDNNSNNNDTGSEHQ) form a disordered region. Residues 533 to 552 (NPGSNNNPSSNDNNSNNNDT) show a composition bias toward low complexity.

This sequence belongs to the beta-catenin family. In terms of assembly, interacts with NVJ1. Forms heterotetramers of two VAC8 and two NVJ1 or two VAC8 and two ATG13. Post-translationally, palmitoylated on one or more of its N-terminal cysteine residues by PFA3, which is required for vacuole fusion.

It is found in the vacuole membrane. Its function is as follows. Functions in both vacuole inheritance and protein targeting from the cytoplasm to vacuole (cvt). Involved in the formation of nucleus-vacuole junctions (NVJs) during piecemeal microautophagy of the nucleus (PMN). NVJs are interorganelle interfaces mediated by NVJ1 in the nuclear envelope and VAC8 on the vacuole membrane. Together, NVJ1 and VAC8 form Velcro-like patches through which teardrop-like portions of the nucleus are pinched off into the vacuolar lumen and degraded by the PMN process. This Saccharomyces cerevisiae (strain ATCC 204508 / S288c) (Baker's yeast) protein is Vacuolar protein 8 (VAC8).